Here is a 177-residue protein sequence, read N- to C-terminus: Adenine phosphoribosyltransferase (177 aa).

It belongs to the purine/pyrimidine phosphoribosyltransferase family. Homodimer.

The protein resides in the cytoplasm. It carries out the reaction AMP + diphosphate = 5-phospho-alpha-D-ribose 1-diphosphate + adenine. Its pathway is purine metabolism; AMP biosynthesis via salvage pathway; AMP from adenine: step 1/1. Its function is as follows. Catalyzes a salvage reaction resulting in the formation of AMP, that is energically less costly than de novo synthesis. The polypeptide is Adenine phosphoribosyltransferase (Chlorobium phaeobacteroides (strain BS1)).